We begin with the raw amino-acid sequence, 87 residues long: CRISPR-associated endoribonuclease Cas2 (87 aa).

Mg(2+) is bound at residue Asp8.

It belongs to the CRISPR-associated endoribonuclease Cas2 protein family. In terms of assembly, homodimer, forms a heterotetramer with a Cas1 homodimer. Mg(2+) is required as a cofactor.

CRISPR (clustered regularly interspaced short palindromic repeat), is an adaptive immune system that provides protection against mobile genetic elements (viruses, transposable elements and conjugative plasmids). CRISPR clusters contain sequences complementary to antecedent mobile elements and target invading nucleic acids. CRISPR clusters are transcribed and processed into CRISPR RNA (crRNA). Functions as a ssRNA-specific endoribonuclease. Involved in the integration of spacer DNA into the CRISPR cassette. The sequence is that of CRISPR-associated endoribonuclease Cas2 from Dictyoglomus turgidum (strain DSM 6724 / Z-1310).